The chain runs to 384 residues: Na(+)/H(+) antiporter NhaA (384 aa).

Transmembrane regions (helical) follow at residues 7–27 (FYNL…LAII), 58–78 (LLLW…GLEI), 94–114 (LVPA…FIFF), 124–144 (GWAI…SLLG), 153–173 (ILLT…IALF), 179–199 (SLLS…LNYF), 204–224 (ISVF…SGVH), 256–276 (VVFL…FVGL), 285–305 (VVLG…FLSL), 325–345 (VYGI…IGSL), and 357–377 (MVKI…FLVL).

This sequence belongs to the NhaA Na(+)/H(+) (TC 2.A.33) antiporter family.

The protein resides in the cell inner membrane. The enzyme catalyses Na(+)(in) + 2 H(+)(out) = Na(+)(out) + 2 H(+)(in). Its function is as follows. Na(+)/H(+) antiporter that extrudes sodium in exchange for external protons. This chain is Na(+)/H(+) antiporter NhaA, found in Legionella pneumophila (strain Corby).